Consider the following 147-residue polypeptide: Sec-independent protein translocase protein TatB (147 aa).

The chain crosses the membrane as a helical span at residues 2–22 (FDGIGFMELLLIGVLGLVVLG). The interval 68-147 (ESKGLSNLSP…DTRSNPKANG (80 aa)) is disordered. The segment covering 71–97 (GLSNLSPELQESIDQLKQAAQSVNRPY) has biased composition (polar residues). A compositionally biased stretch (low complexity) spans 112–133 (PASQSVSSEASPTASSAPTSEP).

Belongs to the TatB family. In terms of assembly, the Tat system comprises two distinct complexes: a TatABC complex, containing multiple copies of TatA, TatB and TatC subunits, and a separate TatA complex, containing only TatA subunits. Substrates initially bind to the TatABC complex, which probably triggers association of the separate TatA complex to form the active translocon.

The protein resides in the cell inner membrane. Functionally, part of the twin-arginine translocation (Tat) system that transports large folded proteins containing a characteristic twin-arginine motif in their signal peptide across membranes. Together with TatC, TatB is part of a receptor directly interacting with Tat signal peptides. TatB may form an oligomeric binding site that transiently accommodates folded Tat precursor proteins before their translocation. The polypeptide is Sec-independent protein translocase protein TatB (Shewanella sp. (strain MR-4)).